Consider the following 150-residue polypeptide: Large ribosomal subunit protein bL9 (150 aa).

Belongs to the bacterial ribosomal protein bL9 family.

In terms of biological role, binds to the 23S rRNA. The sequence is that of Large ribosomal subunit protein bL9 from Latilactobacillus sakei subsp. sakei (strain 23K) (Lactobacillus sakei subsp. sakei).